Reading from the N-terminus, the 309-residue chain is MVNGVLLLHKPVGMTSHDCVMKIRKLLKTKKVGHTGTLDPEVSGVLPICVGRATKIVEYVTDKSKTYDAEITLGFSTSTEDQTGETVSVKPVKEPLKEADIKAVLDELKGPQEQVPPMYSAVKVNGKKLYEYARAGIEVERPKRNITIEDIALTSPVTYNEDTASFRFTVTCSKGTYVRTLAVTIGEKLGYPAHMSHLIRTASGDFSLDECFTFEELEQQVSDGTVAEHAVPIDRALNHLPKWVISDTLAKKAENGSVFDIPAEFSAMTADARIAVCTEDGECVAIYMPHPSKKGLLKPAKVLMQKSEQ.

Asp39 functions as the Nucleophile in the catalytic mechanism.

This sequence belongs to the pseudouridine synthase TruB family. Type 1 subfamily.

The catalysed reaction is uridine(55) in tRNA = pseudouridine(55) in tRNA. Its function is as follows. Responsible for synthesis of pseudouridine from uracil-55 in the psi GC loop of transfer RNAs. The polypeptide is tRNA pseudouridine synthase B (Bacillus velezensis (strain DSM 23117 / BGSC 10A6 / LMG 26770 / FZB42) (Bacillus amyloliquefaciens subsp. plantarum)).